The following is a 156-amino-acid chain: 6,7-dimethyl-8-ribityllumazine synthase (156 aa).

5-amino-6-(D-ribitylamino)uracil-binding positions include Phe22, 57–59 (AYE), and 81–83 (SVI). 86–87 (GT) contacts (2S)-2-hydroxy-3-oxobutyl phosphate. The Proton donor role is filled by His89. Phe114 lines the 5-amino-6-(D-ribitylamino)uracil pocket. Arg128 contributes to the (2S)-2-hydroxy-3-oxobutyl phosphate binding site.

Belongs to the DMRL synthase family. Forms an icosahedral capsid composed of 60 subunits, arranged as a dodecamer of pentamers.

The catalysed reaction is (2S)-2-hydroxy-3-oxobutyl phosphate + 5-amino-6-(D-ribitylamino)uracil = 6,7-dimethyl-8-(1-D-ribityl)lumazine + phosphate + 2 H2O + H(+). The protein operates within cofactor biosynthesis; riboflavin biosynthesis; riboflavin from 2-hydroxy-3-oxobutyl phosphate and 5-amino-6-(D-ribitylamino)uracil: step 1/2. Functionally, catalyzes the formation of 6,7-dimethyl-8-ribityllumazine by condensation of 5-amino-6-(D-ribitylamino)uracil with 3,4-dihydroxy-2-butanone 4-phosphate. This is the penultimate step in the biosynthesis of riboflavin. The polypeptide is 6,7-dimethyl-8-ribityllumazine synthase (Photobacterium profundum (strain SS9)).